Reading from the N-terminus, the 131-residue chain is MVTLYSSPSCTSCRKAKLWLEENHIPYTERNIFSDPLTIEEIKEILRMTESGTDEIISTRSKVFQELNVNLESLPLQDLYKMIRDYPGILRRPIMIDEKRLQVGYNEDEIRRFLPRTVRTFQLREAQRLVN.

A disulfide bridge connects residues Cys-10 and Cys-13.

The protein belongs to the ArsC family. Spx subfamily. Interacts with the C-terminal domain of the alpha subunit of the RNAP.

Its subcellular location is the cytoplasm. Its function is as follows. Global transcriptional regulator that plays a key role in stress response and exerts either positive or negative regulation of genes. Acts by interacting with the C-terminal domain of the alpha subunit of the RNA polymerase (RNAP). This interaction can enhance binding of RNAP to the promoter region of target genes and stimulate their transcription, or block interaction of RNAP with activator. This chain is Global transcriptional regulator Spx 1, found in Bacillus anthracis.